The chain runs to 107 residues: MNNNIHFVDIGFSNYVDAGKILTVNRPDSSPIKRSLQHAKEAGRFLDLTQGKKTRSIITQSSNTGLIFTASAVQTSTIMNRIRETEVKQSKRMAGKLIEKSVEVGNQ.

This sequence belongs to the RemA family.

The chain is Putative regulatory protein BCG9842_A0044 from Bacillus cereus (strain G9842).